Consider the following 234-residue polypeptide: Sperm flagellar protein 1 (234 aa).

In terms of domain architecture, Calponin-homology (CH) spans glutamate 7–glutamate 112. The interval valine 181–arginine 234 is essential for homodimerization and microtubule bundling activity.

As to quaternary structure, homodimer. Interacts with actin, TJP1, CGN and CDH1. As to expression, expressed predominantly in the seminiferous epithelium of adult testis. Expressed in pillar cells of the organ of Corti (at protein level). Expressed in brain, kidney, lung and testis. Highly expressed in the trachea, lung and oviduct.

It is found in the cytoplasm. It localises to the cell projection. The protein resides in the cilium. The protein localises to the flagellum. Its subcellular location is the cytoskeleton. It is found in the cilium axoneme. It localises to the apical cell membrane. The protein resides in the basolateral cell membrane. The protein localises to the stress fiber. Its subcellular location is the microvillus. It is found in the lamellipodium. It localises to the filopodium. Microtubule-associated protein that promotes microtubule bundling and stabilizes microtubules against depolymerization in response to cold shock. Microtubule-associated protein involved in the stabilization of microtubules along the axis of migration during radial intercalation. Promotes the establishment and stabilization of an axis of microtubules required for the active migration of cells into the outer epithelium. Essential for ciliary central apparatus formation which requires both its microtubule-binding and bundling activities and for ciliary localization of HYDIN and SPAG6 in ependymal cilia. Binds actin in intestinal epithelial cells (IECs), essential for IECs survival and contributes to formation of filopodia and lamellipodia in migrating IECs. Regulates planar cell polarity signaling pathway and asymmetric microtubule accumulation in ciliated epithelia. This Mus musculus (Mouse) protein is Sperm flagellar protein 1 (Spef1).